A 187-amino-acid chain; its full sequence is Adenine phosphoribosyltransferase (187 aa).

The protein belongs to the purine/pyrimidine phosphoribosyltransferase family. In terms of assembly, homodimer.

It is found in the cytoplasm. The enzyme catalyses AMP + diphosphate = 5-phospho-alpha-D-ribose 1-diphosphate + adenine. It functions in the pathway purine metabolism; AMP biosynthesis via salvage pathway; AMP from adenine: step 1/1. Functionally, catalyzes a salvage reaction resulting in the formation of AMP, that is energically less costly than de novo synthesis. The sequence is that of Adenine phosphoribosyltransferase from Yersinia pseudotuberculosis serotype O:3 (strain YPIII).